We begin with the raw amino-acid sequence, 51 residues long: DNA-directed RNA polymerases II, IV and V subunit 12 (51 aa).

Zn(2+) contacts are provided by Cys-12, Cys-15, Cys-29, and Cys-32.

Belongs to the archaeal Rpo12/eukaryotic RPC10 RNA polymerase subunit family. Component of the RNA polymerase II, IV and V complexes. Associates with the mediator complex. Interacts with NRPD1.

The protein resides in the nucleus. In terms of biological role, DNA-dependent RNA polymerase catalyzes the transcription of DNA into RNA using the four ribonucleoside triphosphates as substrates. Component of RNA polymerase II which synthesizes mRNA precursors and many functional non-coding RNAs. Pol II is the central component of the basal RNA polymerase II transcription machinery. It is composed of mobile elements that move relative to each other. Component of RNA polymerases IV and V which mediate short-interfering RNAs (siRNA) accumulation and subsequent RNA-directed DNA methylation-dependent (RdDM) transcriptional gene silencing (TGS) of endogenous repeated sequences, including transposable elements. This chain is DNA-directed RNA polymerases II, IV and V subunit 12 (NRPB12), found in Arabidopsis thaliana (Mouse-ear cress).